We begin with the raw amino-acid sequence, 213 residues long: MRNKNTPIAAEGYPFVAIAGFITVVLALLAWKVLAAFFLVVTLFVVFFFRNPQRITPGDENAVVSPADGVVIYLGNARESHLDEEMMKISIFMSVFNVHINRVPVSGRVVDRFYLPGKFLDVRDERATFENEQNGLVLETARGVKMVVVQVAGLIARRIVCYPKIGDMLQRGQRYGLIRFGSRLDVYLPKNVELRVSMGDKTVAGETILGILP.

Residue Ser182 is the Schiff-base intermediate with substrate; via pyruvic acid of the active site. Ser182 bears the Pyruvic acid (Ser); by autocatalysis mark.

The protein belongs to the phosphatidylserine decarboxylase family. PSD-A subfamily. Heterodimer of a large membrane-associated beta subunit and a small pyruvoyl-containing alpha subunit. It depends on pyruvate as a cofactor. Is synthesized initially as an inactive proenzyme. Formation of the active enzyme involves a self-maturation process in which the active site pyruvoyl group is generated from an internal serine residue via an autocatalytic post-translational modification. Two non-identical subunits are generated from the proenzyme in this reaction, and the pyruvate is formed at the N-terminus of the alpha chain, which is derived from the carboxyl end of the proenzyme. The post-translation cleavage follows an unusual pathway, termed non-hydrolytic serinolysis, in which the side chain hydroxyl group of the serine supplies its oxygen atom to form the C-terminus of the beta chain, while the remainder of the serine residue undergoes an oxidative deamination to produce ammonia and the pyruvoyl prosthetic group on the alpha chain.

The protein localises to the cell membrane. The enzyme catalyses a 1,2-diacyl-sn-glycero-3-phospho-L-serine + H(+) = a 1,2-diacyl-sn-glycero-3-phosphoethanolamine + CO2. The protein operates within phospholipid metabolism; phosphatidylethanolamine biosynthesis; phosphatidylethanolamine from CDP-diacylglycerol: step 2/2. Functionally, catalyzes the formation of phosphatidylethanolamine (PtdEtn) from phosphatidylserine (PtdSer). This is Phosphatidylserine decarboxylase proenzyme from Geotalea uraniireducens (strain Rf4) (Geobacter uraniireducens).